The chain runs to 460 residues: Cysteine--tRNA ligase (460 aa).

Cys28 lines the Zn(2+) pocket. Residues 30–40 carry the 'HIGH' region motif; that stretch reads MTVYDYCHLGH. Residues Cys209, His234, and Glu238 each contribute to the Zn(2+) site. The 'KMSKS' region signature appears at 266-270; the sequence is KMSKS. Lys269 serves as a coordination point for ATP.

It belongs to the class-I aminoacyl-tRNA synthetase family. As to quaternary structure, monomer. Requires Zn(2+) as cofactor.

The protein resides in the cytoplasm. The catalysed reaction is tRNA(Cys) + L-cysteine + ATP = L-cysteinyl-tRNA(Cys) + AMP + diphosphate. This chain is Cysteine--tRNA ligase, found in Pseudomonas aeruginosa (strain UCBPP-PA14).